The following is a 361-amino-acid chain: F-box protein pof7 (361 aa).

In terms of domain architecture, F-box spans N105–Y157.

In terms of assembly, interacts with skp1.

Its subcellular location is the cytoplasm. The chain is F-box protein pof7 (pof7) from Schizosaccharomyces pombe (strain 972 / ATCC 24843) (Fission yeast).